The primary structure comprises 212 residues: Probable transaldolase (212 aa).

Catalysis depends on Lys83, which acts as the Schiff-base intermediate with substrate.

Belongs to the transaldolase family. Type 3B subfamily.

It localises to the cytoplasm. The enzyme catalyses D-sedoheptulose 7-phosphate + D-glyceraldehyde 3-phosphate = D-erythrose 4-phosphate + beta-D-fructose 6-phosphate. It participates in carbohydrate degradation; pentose phosphate pathway; D-glyceraldehyde 3-phosphate and beta-D-fructose 6-phosphate from D-ribose 5-phosphate and D-xylulose 5-phosphate (non-oxidative stage): step 2/3. Its function is as follows. Transaldolase is important for the balance of metabolites in the pentose-phosphate pathway. This Halalkalibacterium halodurans (strain ATCC BAA-125 / DSM 18197 / FERM 7344 / JCM 9153 / C-125) (Bacillus halodurans) protein is Probable transaldolase (tal).